Reading from the N-terminus, the 613-residue chain is Chaperone protein DnaK (613 aa).

T173 carries the post-translational modification Phosphothreonine; by autocatalysis. The interval 577 to 613 is disordered; the sequence is AKQAQAQQEGGAEGAQKADDNVVDAEYEEVNDDQEKK. Residues 597–613 are compositionally biased toward acidic residues; sequence NVVDAEYEEVNDDQEKK.

It belongs to the heat shock protein 70 family.

Its function is as follows. Acts as a chaperone. The chain is Chaperone protein DnaK from Bacillus pumilus (strain SAFR-032).